The following is a 781-amino-acid chain: Cytosolic phospholipase A2 beta (781 aa).

The region spanning 1–112 (MAVAEVSRTC…RAGEFRRESF (112 aa)) is the C2 domain. 5 residues coordinate Ca(2+): aspartate 26, aspartate 32, aspartate 82, aspartate 84, and aspartate 90. In terms of domain architecture, PLA2c spans 246 to 781 (EAGLRELAVR…VQRRRQRRPH (536 aa)). The Nucleophile role is filled by serine 335. The active-site Proton acceptor is aspartate 615.

Ca(2+) serves as cofactor. In terms of tissue distribution, widely expressed. Expressed at higher level in brain, heart, liver, cerebellum and pancreas.

Its subcellular location is the cytoplasm. The protein localises to the cytosol. It localises to the mitochondrion membrane. It is found in the early endosome membrane. It carries out the reaction a 1,2-diacyl-sn-glycero-3-phosphocholine + H2O = a 1-acyl-sn-glycero-3-phosphocholine + a fatty acid + H(+). It catalyses the reaction a 1-acyl-sn-glycero-3-phosphocholine + H2O = sn-glycerol 3-phosphocholine + a fatty acid + H(+). The enzyme catalyses 1-hexadecanoyl-2-(9Z,12Z-octadecadienoyl)-sn-glycero-3-phosphoethanolamine + H2O = 1-hexadecanoyl-sn-glycero-3-phosphoethanolamine + (9Z,12Z)-octadecadienoate + H(+). The catalysed reaction is 1-hexadecanoyl-2-(5Z,8Z,11Z,14Z-eicosatetraenoyl)-sn-glycero-3-phosphoethanolamine + H2O = 1-hexadecanoyl-sn-glycero-3-phosphoethanolamine + (5Z,8Z,11Z,14Z)-eicosatetraenoate + H(+). It carries out the reaction 1-hexadecanoyl-sn-glycero-3-phosphocholine + H2O = sn-glycerol 3-phosphocholine + hexadecanoate + H(+). It catalyses the reaction 1-hexadecanoyl-2-(5Z,8Z,11Z,14Z-eicosatetraenoyl)-sn-glycero-3-phosphocholine + H2O = 1-hexadecanoyl-sn-glycero-3-phosphocholine + (5Z,8Z,11Z,14Z)-eicosatetraenoate + H(+). The enzyme catalyses 1-hexadecanoyl-2-(5Z,8Z,11Z,14Z-eicosatetraenoyl)-sn-glycero-3-phosphocholine + H2O = 2-(5Z,8Z,11Z,14Z)-eicosatetraenoyl-sn-glycero-3-phosphocholine + hexadecanoate + H(+). With respect to regulation, stimulated by cytosolic Ca(2+). Functionally, calcium-dependent phospholipase A1 and A2 and lysophospholipase that may play a role in membrane phospholipid remodeling. Calcium-dependent phospholipase A2 and lysophospholipase. Cleaves the ester bond of the fatty acyl group attached to the sn-2 position of phosphatidylethanolamines, producing lysophospholipids that may be used in deacylation-reacylation cycles. Hydrolyzes lysophosphatidylcholines with low efficiency but is inefficient toward phosphatidylcholines. In terms of biological role, calcium-dependent phospholipase A1 and A2 and lysophospholipase. Cleaves the ester bond of the fatty acyl group attached to the sn-1 or sn-2 position of diacyl phospholipids (phospholipase A1 and A2 activity, respectively), producing lysophospholipids that may be used in deacylation-reacylation cycles. Can further hydrolyze lysophospholipids enabling complete deacylation. Has no activity toward alkylacyl phospholipids. The chain is Cytosolic phospholipase A2 beta (PLA2G4B) from Homo sapiens (Human).